The following is a 313-amino-acid chain: Ribose-phosphate pyrophosphokinase (313 aa).

ATP contacts are provided by residues 40 to 42 (DGE) and 98 to 99 (RQ). Positions 132 and 172 each coordinate Mg(2+). K195 is an active-site residue. D-ribose 5-phosphate contacts are provided by residues R197, D221, and 225 to 229 (DTAGT).

It belongs to the ribose-phosphate pyrophosphokinase family. Class I subfamily. In terms of assembly, homohexamer. Requires Mg(2+) as cofactor.

It is found in the cytoplasm. The catalysed reaction is D-ribose 5-phosphate + ATP = 5-phospho-alpha-D-ribose 1-diphosphate + AMP + H(+). It functions in the pathway metabolic intermediate biosynthesis; 5-phospho-alpha-D-ribose 1-diphosphate biosynthesis; 5-phospho-alpha-D-ribose 1-diphosphate from D-ribose 5-phosphate (route I): step 1/1. Its function is as follows. Involved in the biosynthesis of the central metabolite phospho-alpha-D-ribosyl-1-pyrophosphate (PRPP) via the transfer of pyrophosphoryl group from ATP to 1-hydroxyl of ribose-5-phosphate (Rib-5-P). This chain is Ribose-phosphate pyrophosphokinase, found in Porphyromonas gingivalis (strain ATCC BAA-308 / W83).